The sequence spans 352 residues: B1 bradykinin receptor (352 aa).

The Extracellular segment spans residues 1 to 41 (MAAQTLLELQPSNQSQLSALNTTSCDNAREAWDLLYQVLPI). N-linked (GlcNAc...) asparagine glycans are attached at residues N13 and N21. A helical membrane pass occupies residues 42–62 (FILTICAFGLLGNLFVLSVFL). At 63 to 72 (LLRRRLTVAE) the chain is on the cytoplasmic side. Residues 73 to 93 (IYLVNLAASDLVFVLGLPFWA) form a helical membrane-spanning segment. The Extracellular portion of the chain corresponds to 94-110 (QNIWNQFNWPFGDLLCR). A disulfide bridge connects residues C109 and C188. The chain crosses the membrane as a helical span at residues 111 to 131 (VVNGVIKANLFISIFLMVAIS). Topologically, residues 132–153 (QDRYCVLVHPMASRRRRRRRRA) are cytoplasmic. A helical membrane pass occupies residues 154 to 174 (RATCMVIWAVGALLSTPTFLL). At 175–206 (RSVSAVQDLNISACILLLPHQAWHVARIVELN) the chain is on the extracellular side. A glycan (N-linked (GlcNAc...) asparagine) is linked at N184. The chain crosses the membrane as a helical span at residues 207–227 (VLGFLLPLAAIIFFNGHILAS). Residues 228-250 (LRGQGEVSQTRIGGPKDCKTTVL) lie on the Cytoplasmic side of the membrane. Residues 251–271 (ILTLVAAFLVCWAPYHCFAFL) traverse the membrane as a helical segment. Over 272–294 (EFLFQVRAVRGCFWEDFIDLGLQ) the chain is Extracellular. The helical transmembrane segment at 295–315 (LANFFAFTNSCLNPVIYVFVG) threads the bilayer. The Cytoplasmic portion of the chain corresponds to 316–326 (RLFRTKVWELY). C329 carries S-palmitoyl cysteine lipidation.

This sequence belongs to the G-protein coupled receptor 1 family. Bradykinin receptor subfamily. BDKRB1 sub-subfamily.

Its subcellular location is the cell membrane. This is a receptor for bradykinin. Could be a factor in chronic pain and inflammation. This Tupaia minor (Pigmy tree shrew) protein is B1 bradykinin receptor (BDKRB1).